The chain runs to 364 residues: Methylthioribose-1-phosphate isomerase (364 aa).

Substrate contacts are provided by residues 53 to 55 (RGA), Arg-90, and Gln-203. The active-site Proton donor is Asp-244. 254-255 (NK) lines the substrate pocket.

It belongs to the eIF-2B alpha/beta/delta subunits family. MtnA subfamily.

The enzyme catalyses 5-(methylsulfanyl)-alpha-D-ribose 1-phosphate = 5-(methylsulfanyl)-D-ribulose 1-phosphate. The protein operates within amino-acid biosynthesis; L-methionine biosynthesis via salvage pathway; L-methionine from S-methyl-5-thio-alpha-D-ribose 1-phosphate: step 1/6. Its function is as follows. Catalyzes the interconversion of methylthioribose-1-phosphate (MTR-1-P) into methylthioribulose-1-phosphate (MTRu-1-P). The polypeptide is Methylthioribose-1-phosphate isomerase (Brucella anthropi (strain ATCC 49188 / DSM 6882 / CCUG 24695 / JCM 21032 / LMG 3331 / NBRC 15819 / NCTC 12168 / Alc 37) (Ochrobactrum anthropi)).